The sequence spans 52 residues: uncharacterized protein (52 aa).

Residues 7 to 27 (MFQLFVFIIFAAVVFAAVTGF) form a helical membrane-spanning segment.

It is found in the membrane. This is an uncharacterized protein from Bacillus subtilis (strain 168).